A 280-amino-acid chain; its full sequence is Bicarbonate transport system permease protein CmpB (280 aa).

Transmembrane regions (helical) follow at residues Pro-32–Ile-52, Tyr-99–Leu-119, Ile-126–Leu-146, Ala-153–Val-173, Ile-198–Ala-218, Trp-219–Ile-239, and Ile-251–Tyr-271. The ABC transmembrane type-1 domain maps to Thr-88–Asp-266.

This sequence belongs to the binding-protein-dependent transport system permease family. In terms of assembly, the complex is composed of two ATP-binding proteins (CmpC and CmpD), a transmembrane protein (CmpB) and a solute-binding protein (CmpA).

Its subcellular location is the cell inner membrane. Functionally, part of the ABC transporter complex CmpABCD involved in bicarbonate transport. Probably responsible for the translocation of the substrate across the membrane. This chain is Bicarbonate transport system permease protein CmpB (cmpB), found in Synechocystis sp. (strain ATCC 27184 / PCC 6803 / Kazusa).